A 306-amino-acid polypeptide reads, in one-letter code: uncharacterized protein (306 aa).

8 consecutive transmembrane segments (helical) span residues 7–27 (LESW…GYLA), 30–50 (VGII…FMAL), 68–88 (LFIT…LFAL), 95–115 (ADHV…TLFI), 144–164 (AIGV…LMSF), 194–214 (IGAI…VLSV), 232–252 (IAIM…GLIF), and 274–294 (TIPF…NVAP).

It is found in the cell membrane. This is an uncharacterized protein from Mycoplasma genitalium (strain ATCC 33530 / DSM 19775 / NCTC 10195 / G37) (Mycoplasmoides genitalium).